A 192-amino-acid polypeptide reads, in one-letter code: Ion-translocating oxidoreductase complex subunit B (192 aa).

Positions 1–26 (MNTIWIAVGALTLLGLVFGAILGYAS) are hydrophobic. Residues 32–91 (EDDPVVEKIDAILPQSQCGQCGYPGCRPYAEAVGLQGEKINRCAPGGEAVMLKMAELLNV) enclose the 4Fe-4S domain. Residues Cys49, Cys52, Cys57, Cys74, Cys117, Cys120, Cys123, Cys127, Cys147, Cys150, Cys153, and Cys157 each coordinate [4Fe-4S] cluster. 4Fe-4S ferredoxin-type domains follow at residues 108–137 (MLAV…GATR) and 138–167 (AMHT…LRPV).

Belongs to the 4Fe4S bacterial-type ferredoxin family. RnfB subfamily. As to quaternary structure, the complex is composed of six subunits: RsxA, RsxB, RsxC, RsxD, RsxE and RsxG. The cofactor is [4Fe-4S] cluster.

It localises to the cell inner membrane. Part of a membrane-bound complex that couples electron transfer with translocation of ions across the membrane. Required to maintain the reduced state of SoxR. The protein is Ion-translocating oxidoreductase complex subunit B of Salmonella agona (strain SL483).